The chain runs to 536 residues: Hydroxylamine oxidoreductase (536 aa).

The first 26 residues, 1 to 26 (MFEIFKKPLSRIVGATFAFAGVTLLA), serve as a signal peptide directing secretion. Residues Cys116, Cys119, His120, His136, Cys160, Cys163, His164, His168, Cys179, Cys182, His183, His198, Cys223, Cys226, His227, Cys234, Cys237, His238, His241, Cys254, Cys257, and His258 each coordinate heme c. His263 contacts hydroxylamine. Heme c is bound by residues His274, Cys301, Cys304, His305, His311, Cys346, Cys349, His350, His443, and Tyr451.

In terms of assembly, homotrimer; subunits are linked by two covalent bonds between Tyr-451 of one subunit and heme P460 of an adjacent subunit. Heme c is required as a cofactor.

The protein localises to the anammoxosome. The enzyme catalyses hydroxylamine + 3 Fe(III)-[cytochrome c] = nitric oxide + 3 Fe(II)-[cytochrome c] + 3 H(+). Its function is as follows. Catalyzes the oxidation of hydroxylamine to nitric oxide with cytochrome c acting as an electron acceptor. Does not oxidize hydroxylamine to nitrite. Also able to catalyze the four-electron oxidation of hydrazine to N(2) in vitro with reduced efficiency; however, this reaction is probably not physiological. In Kuenenia stuttgartiensis, this protein is Hydroxylamine oxidoreductase.